Here is a 342-residue protein sequence, read N- to C-terminus: MNKDLLLSSYDYTLANELIANYPTNPKEDARLLVFDRKNKEIFHTTFKNLQDFLPNCAIFFNDTKVIKARIYGNKASGGKIELFLHQPFLNSHDPLFLAQIKGRVKKDEILYFKDDLKVRVVELLNDGLRKVQFFQNDKTLDTSNLYNLLDKIGHIPLPPYIKREDEKSDLKDYQSIFAKNLGAVAAPTASLHFSETMLENLRKKHEIYHLTLHVGAGTFKSVECENIQEHKMHSEFFNIPQQACEIIDSKQAILGVGTTVTRTIEYYARTKTKNGFCDLFLHPQNPPIRQNHLLTNFHLPKSTLIMLVSAFIGREQCLKLYELAIKEKYRFYSYGDAMLIL.

Belongs to the QueA family. In terms of assembly, monomer.

The protein localises to the cytoplasm. It carries out the reaction 7-aminomethyl-7-carbaguanosine(34) in tRNA + S-adenosyl-L-methionine = epoxyqueuosine(34) in tRNA + adenine + L-methionine + 2 H(+). The protein operates within tRNA modification; tRNA-queuosine biosynthesis. Its function is as follows. Transfers and isomerizes the ribose moiety from AdoMet to the 7-aminomethyl group of 7-deazaguanine (preQ1-tRNA) to give epoxyqueuosine (oQ-tRNA). The polypeptide is S-adenosylmethionine:tRNA ribosyltransferase-isomerase (Campylobacter jejuni (strain RM1221)).